Here is a 540-residue protein sequence, read N- to C-terminus: Phosphoenolpyruvate carboxykinase (ATP) (540 aa).

Residue Arg-65 coordinates substrate. Lys-87 is modified (N6-acetyllysine). 2 residues coordinate substrate: Tyr-207 and Lys-213. ATP is bound by residues Lys-213, His-232, and 248–256; that span reads GLSGTGKTT. Mn(2+)-binding residues include Lys-213 and His-232. Asp-269 is a Mn(2+) binding site. ATP contacts are provided by residues Glu-297, Arg-333, 449-450, and Thr-455; that span reads RI. Residue Arg-333 coordinates substrate. At Lys-523 the chain carries N6-acetyllysine.

The protein belongs to the phosphoenolpyruvate carboxykinase (ATP) family. As to quaternary structure, monomer. The cofactor is Mn(2+).

The protein localises to the cytoplasm. It catalyses the reaction oxaloacetate + ATP = phosphoenolpyruvate + ADP + CO2. It participates in carbohydrate biosynthesis; gluconeogenesis. In terms of biological role, involved in the gluconeogenesis. Catalyzes the conversion of oxaloacetate (OAA) to phosphoenolpyruvate (PEP) through direct phosphoryl transfer between the nucleoside triphosphate and OAA. This chain is Phosphoenolpyruvate carboxykinase (ATP), found in Escherichia coli O6:H1 (strain CFT073 / ATCC 700928 / UPEC).